A 392-amino-acid polypeptide reads, in one-letter code: DNA replication and repair protein RecF (392 aa).

Residue 30–37 participates in ATP binding; that stretch reads GPNAAGKT.

It belongs to the RecF family.

The protein localises to the cytoplasm. The RecF protein is involved in DNA metabolism; it is required for DNA replication and normal SOS inducibility. RecF binds preferentially to single-stranded, linear DNA. It also seems to bind ATP. This Chloroflexus aurantiacus (strain ATCC 29364 / DSM 637 / Y-400-fl) protein is DNA replication and repair protein RecF.